A 123-amino-acid chain; its full sequence is UPF0738 protein BCE33L1094 (123 aa).

Belongs to the UPF0738 family.

This chain is UPF0738 protein BCE33L1094, found in Bacillus cereus (strain ZK / E33L).